The sequence spans 92 residues: Precursor of elicitor peptide 1 (92 aa).

The propeptide occupies methionine 1 to arginine 69. The disordered stretch occupies residues histidine 35 to asparagine 92. Positions aspartate 37 to lysine 48 are enriched in polar residues. Residues glutamine 49–valine 64 are compositionally biased toward basic and acidic residues.

Belongs to the brassicaceae elicitor peptide family. Interacts with its receptor PEPR1.

In terms of biological role, elicitor of plant defense. Induces the production of plant defensin (PDF1.2) and of H(2)O(2). Promotes resistance to the root fungal pathogen P.irregulare. Triggers the expression of several PROSCOOP genes (e.g. PROSCOOP2, PROSCOOP7, PROSCOOP8, PROSCOOP12 and PROSCOOP13). This is Precursor of elicitor peptide 1 from Arabidopsis thaliana (Mouse-ear cress).